We begin with the raw amino-acid sequence, 75 residues long: UPF0352 protein YPTB1297 (75 aa).

Belongs to the UPF0352 family.

This is UPF0352 protein YPTB1297 from Yersinia pseudotuberculosis serotype I (strain IP32953).